Reading from the N-terminus, the 248-residue chain is tRNA (guanine-N(7)-)-methyltransferase (248 aa).

Residues G70, 93 to 94, 129 to 130, and L149 contribute to the S-adenosyl-L-methionine site; these read EI and NA. D152 is a catalytic residue. 227-229 is an S-adenosyl-L-methionine binding site; sequence SEE.

The protein belongs to the class I-like SAM-binding methyltransferase superfamily. TrmB family.

The protein localises to the nucleus. It carries out the reaction guanosine(46) in tRNA + S-adenosyl-L-methionine = N(7)-methylguanosine(46) in tRNA + S-adenosyl-L-homocysteine. It participates in tRNA modification; N(7)-methylguanine-tRNA biosynthesis. Functionally, catalyzes the formation of N(7)-methylguanine at position 46 (m7G46) in tRNA. The sequence is that of tRNA (guanine-N(7)-)-methyltransferase from Drosophila mojavensis (Fruit fly).